The primary structure comprises 216 residues: Probable nicotinate-nucleotide adenylyltransferase (216 aa).

This sequence belongs to the NadD family.

It catalyses the reaction nicotinate beta-D-ribonucleotide + ATP + H(+) = deamido-NAD(+) + diphosphate. It functions in the pathway cofactor biosynthesis; NAD(+) biosynthesis; deamido-NAD(+) from nicotinate D-ribonucleotide: step 1/1. In terms of biological role, catalyzes the reversible adenylation of nicotinate mononucleotide (NaMN) to nicotinic acid adenine dinucleotide (NaAD). The sequence is that of Probable nicotinate-nucleotide adenylyltransferase from Geobacter sp. (strain M21).